The sequence spans 124 residues: Fluoride-specific ion channel FluC 2 (124 aa).

4 consecutive transmembrane segments (helical) span residues 1-21, 36-58, 63-85, and 104-124; these read MNFLLAGIGASIGAMLRYAIT, SNLPTPTLFINLTGAFILGFIFG, VFIYAIVGTGVLGGYTTFSTMNT, and LSSYLGGLILVFVGYYLAILF. Na(+)-binding residues include G75 and T78.

This sequence belongs to the fluoride channel Fluc/FEX (TC 1.A.43) family. As to quaternary structure, heterodimer composed of FluC1 and FluC2. Neither FluC1 nor FluC2 alone catalyzes fluoride efflux from liposomes.

It is found in the cell membrane. It catalyses the reaction fluoride(in) = fluoride(out). With respect to regulation, na(+) is not transported, but it plays an essential structural role and its presence is essential for fluoride channel function. Functionally, fluoride-specific ion channel. Important for reducing fluoride concentration in the cell, thus reducing its toxicity. The sequence is that of Fluoride-specific ion channel FluC 2 from Lactobacillus acidophilus (strain ATCC 700396 / NCK56 / N2 / NCFM).